The sequence spans 548 residues: Chaperonin GroEL (548 aa).

ATP is bound by residues 30-33, K51, 87-91, G415, and D496; these read TLGP and DGTTT.

Belongs to the chaperonin (HSP60) family. In terms of assembly, forms a cylinder of 14 subunits composed of two heptameric rings stacked back-to-back. Interacts with the co-chaperonin GroES.

Its subcellular location is the cytoplasm. The enzyme catalyses ATP + H2O + a folded polypeptide = ADP + phosphate + an unfolded polypeptide.. Its function is as follows. Together with its co-chaperonin GroES, plays an essential role in assisting protein folding. The GroEL-GroES system forms a nano-cage that allows encapsulation of the non-native substrate proteins and provides a physical environment optimized to promote and accelerate protein folding. The chain is Chaperonin GroEL from Haemophilus influenzae (strain ATCC 51907 / DSM 11121 / KW20 / Rd).